We begin with the raw amino-acid sequence, 295 residues long: Homeobox protein XHOX-7.1 (295 aa).

Disordered stretches follow at residues 75 to 115 (RKPG…PISL) and 134 to 175 (KPES…KPRT). The span at 84–97 (SSPTGSPLAGTSHS) shows a compositional bias: polar residues. The span at 141 to 153 (SSWIQSPSFSPSP) shows a compositional bias: low complexity. The segment covering 164–174 (LRKHKTNRKPR) has biased composition (basic residues). Positions 170–229 (NRKPRTPFTTSQLLALERKFRQKQYLSIAERAEFSSSLNLTETQVKIWFQNRRAKAKRLQ) form a DNA-binding region, homeobox.

This sequence belongs to the Msh homeobox family.

The protein resides in the nucleus. The chain is Homeobox protein XHOX-7.1 from Xenopus laevis (African clawed frog).